The following is a 318-amino-acid chain: tRNA pseudouridine synthase B (318 aa).

The active-site Nucleophile is D47.

Belongs to the pseudouridine synthase TruB family. Type 1 subfamily.

The enzyme catalyses uridine(55) in tRNA = pseudouridine(55) in tRNA. Its function is as follows. Responsible for synthesis of pseudouridine from uracil-55 in the psi GC loop of transfer RNAs. This is tRNA pseudouridine synthase B from Shewanella putrefaciens (strain CN-32 / ATCC BAA-453).